The chain runs to 299 residues: Porphobilinogen deaminase (299 aa).

Cysteine 242 is subject to S-(dipyrrolylmethanemethyl)cysteine.

This sequence belongs to the HMBS family. In terms of assembly, monomer. It depends on dipyrromethane as a cofactor.

The enzyme catalyses 4 porphobilinogen + H2O = hydroxymethylbilane + 4 NH4(+). It functions in the pathway porphyrin-containing compound metabolism; protoporphyrin-IX biosynthesis; coproporphyrinogen-III from 5-aminolevulinate: step 2/4. Its function is as follows. Tetrapolymerization of the monopyrrole PBG into the hydroxymethylbilane pre-uroporphyrinogen in several discrete steps. This Rickettsia typhi (strain ATCC VR-144 / Wilmington) protein is Porphobilinogen deaminase.